Reading from the N-terminus, the 218-residue chain is Glycerol-3-phosphate acyltransferase 2 (218 aa).

Helical transmembrane passes span 6–26 (YLLIFILAYLIGSFPTGVLVG), 50–70 (VMGPVAGSAVLVIDVLKGTLA), 85–105 (LLLIAGACAILGHTFSIFLKF), 115–135 (AGVFLGYNLKFFGLCALVFLP), and 159–179 (FWFHDIFLTIITGIMMILLFV).

It belongs to the PlsY family. As to quaternary structure, probably interacts with PlsX.

The protein localises to the cell membrane. The catalysed reaction is an acyl phosphate + sn-glycerol 3-phosphate = a 1-acyl-sn-glycero-3-phosphate + phosphate. It functions in the pathway lipid metabolism; phospholipid metabolism. Its function is as follows. Catalyzes the transfer of an acyl group from acyl-phosphate (acyl-PO(4)) to glycerol-3-phosphate (G3P) to form lysophosphatidic acid (LPA). This enzyme utilizes acyl-phosphate as fatty acyl donor, but not acyl-CoA or acyl-ACP. The sequence is that of Glycerol-3-phosphate acyltransferase 2 from Lactobacillus johnsonii (strain CNCM I-12250 / La1 / NCC 533).